The following is a 163-amino-acid chain: UPF0262 protein RPD_4278 (163 aa).

Belongs to the UPF0262 family.

This chain is UPF0262 protein RPD_4278, found in Rhodopseudomonas palustris (strain BisB5).